A 263-amino-acid polypeptide reads, in one-letter code: Neurovirulence factor ICP34.5 (263 aa).

Residues 1–14 are compositionally biased toward basic residues; sequence MARRRRHRGPRRPR. Positions 1–16 are required for nucleolar localization; that stretch reads MARRRRHRGPRRPRPP. 2 disordered regions span residues 1-128 and 149-190; these read MARR…PFRL and RRAG…PATP. Over residues 24 to 35 the composition is skewed to polar residues; it reads TAQSQVTSTPNS. The span at 45-58 shows a compositional bias: pro residues; that stretch reads AAPPPPPASGPPPS. The span at 73–83 shows a compositional bias: acidic residues; it reads ASDDDDDDDWP. Composition is skewed to pro residues over residues 84–93 and 119–128; these read DSPPPEPAPE and SHPPSRPFRL. The short motif at 128 to 137 is the Nuclear export signal element; the sequence is LPPRLALRLR. 10 tandem repeats follow at residues 161-163, 164-166, 167-169, 170-172, 173-175, 176-178, 179-181, 182-184, 185-187, and 188-190. Residues 161–190 are 10 X 3 AA tandem repeats of A-T-P; the sequence is ATPATPATPATPATPATPATPATPATPATP. The span at 164–190 shows a compositional bias: low complexity; that stretch reads ATPATPATPATPATPATPATPATPATP. Residues 190-203 form an interaction with host PPP1CA region; sequence PARVRFSPHVRVRH. The interval 205 to 263 is important for interferon resistance; that stretch reads VVWASAARLARRGSWARERADRARFRRRVAEAEAVIGPCLGPEARARALARGAGPANSV. The Bipartite nuclear localization signal motif lies at 215–233; that stretch reads RRGSWARERADRARFRRRV. The interaction with host EIF2S1/EIF-2ALPHA stretch occupies residues 233–248; that stretch reads VAEAEAVIGPCLGPEA.

The protein belongs to the PPP1R15 family. In terms of assembly, interacts with host PPP1CA; this interaction to forms a high-molecular-weight complex that dephosphorylates EIF2S1/eIF-2alpha. Interacts with host EIF2S1/eIF-2alpha; this interaction is crucial for the specific dephosphorylation of EIF2S1/eIF-2alpha by PPP1CA. Binds to proliferating cell nuclear antigen (PCNA), which may release host cells from growth arrest and facilitate viral replication. Interacts (via N-terminus) with host C1QBP; this interaction allows C1QBP to be recruited to the inner nuclear membrane by ICP34.5. Interacts with host PRKCA. Interacts with protein UL31. Interacts with host STING/TMEM173; this interaction inhibits the intracellular DNA sensing pathway. Interacts with host BECN1; this interaction modulates host autophagy.

Its subcellular location is the host cytoplasm. It is found in the host nucleus. It localises to the host nucleolus. The protein resides in the virion. Inhibits the establishment of the immune response and of the integrated stress response (ISR) in the infected cell. Plays essential roles in viral nuclear egress to mediate capsid transit across the nuclear membrane. Facilitates nuclear egress cooperatively with host C1QBP and protein kinase C/PKC to induce lamin A/C phosphorylation and subsequent reorganization. In turn, lamina disassembles and nuclear egress occurs. Recruits the serine/threonine protein phosphatase PPP1CA/PP1-alpha to dephosphorylate the translation initiation factor EIF2S1/eIF-2alpha, thereby couteracting the host shutoff of protein synthesis involving double-stranded RNA-dependent protein kinase EIF2AK2/PKR. In turn, controls host IRF3 activation and subsequently inhibits host interferon response. Controls the DNA sensing pathway by interacting with and inhibiting host STING/TMEM173. Also down-modulates the host MHC class II proteins cell surface expression. Acts as a neurovirulence factor that has a profound effect on the growth of the virus in central nervous system tissue, by interacting with host BECN1 and thereby antagonizing the host autophagy response. This Human herpesvirus 1 (strain F) (HHV-1) protein is Neurovirulence factor ICP34.5 (RL1).